Consider the following 49-residue polypeptide: Large ribosomal subunit protein bL33B (49 aa).

It belongs to the bacterial ribosomal protein bL33 family.

In Bacillus licheniformis, this protein is Large ribosomal subunit protein bL33B (rpmGB).